The chain runs to 345 residues: GTPase Obg (345 aa).

An Obg domain is found at 1 to 159 (MKFLDQAKVY…KWIWLRLKLI (159 aa)). One can recognise an OBG-type G domain in the interval 160-327 (ADAGLVGLPN…ALRALLAVID (168 aa)). GTP-binding positions include 166 to 173 (GLPNAGKS), 191 to 195 (FTTLH), 212 to 215 (DIPG), 279 to 282 (SKID), and 308 to 310 (SSQ). Mg(2+)-binding residues include serine 173 and threonine 193.

This sequence belongs to the TRAFAC class OBG-HflX-like GTPase superfamily. OBG GTPase family. In terms of assembly, monomer. Mg(2+) serves as cofactor.

It is found in the cytoplasm. Functionally, an essential GTPase which binds GTP, GDP and possibly (p)ppGpp with moderate affinity, with high nucleotide exchange rates and a fairly low GTP hydrolysis rate. Plays a role in control of the cell cycle, stress response, ribosome biogenesis and in those bacteria that undergo differentiation, in morphogenesis control. In Azorhizobium caulinodans (strain ATCC 43989 / DSM 5975 / JCM 20966 / LMG 6465 / NBRC 14845 / NCIMB 13405 / ORS 571), this protein is GTPase Obg.